The following is a 79-amino-acid chain: Cell division protein ZapB (79 aa).

A coiled-coil region spans residues 3–79 (LEVFEKLEAK…QALLGRMEEV (77 aa)). Lysine 8 is modified (N6-acetyllysine). The disordered stretch occupies residues 34–65 (NNSLSQEVQNAQHQREELERENNHLKEQQNGW). The segment covering 35 to 45 (NSLSQEVQNAQ) has biased composition (polar residues). Positions 46-60 (HQREELERENNHLKE) are enriched in basic and acidic residues.

The protein belongs to the ZapB family. Homodimer. The ends of the coiled-coil dimer bind to each other, forming polymers. Interacts with FtsZ.

Its subcellular location is the cytoplasm. Its function is as follows. Non-essential, abundant cell division factor that is required for proper Z-ring formation. It is recruited early to the divisome by direct interaction with FtsZ, stimulating Z-ring assembly and thereby promoting cell division earlier in the cell cycle. Its recruitment to the Z-ring requires functional FtsA or ZipA. The polypeptide is Cell division protein ZapB (Shigella boydii serotype 18 (strain CDC 3083-94 / BS512)).